A 139-amino-acid polypeptide reads, in one-letter code: D-ribose pyranase (139 aa).

Residue H20 is the Proton donor of the active site. Residues D28, H106, and 128–130 each bind substrate; that span reads YAN.

The protein belongs to the RbsD / FucU family. RbsD subfamily. As to quaternary structure, homodecamer.

It localises to the cytoplasm. The enzyme catalyses beta-D-ribopyranose = beta-D-ribofuranose. Its pathway is carbohydrate metabolism; D-ribose degradation; D-ribose 5-phosphate from beta-D-ribopyranose: step 1/2. Functionally, catalyzes the interconversion of beta-pyran and beta-furan forms of D-ribose. This chain is D-ribose pyranase, found in Enterobacter sp. (strain 638).